The following is a 1023-amino-acid chain: NLR family CARD domain-containing protein 4 (1023 aa).

Residues methionine 1 to serine 88 enclose the CARD domain. The tract at residues glutamate 95 to glycine 298 is nucleotide-binding domain (NBD). The region spanning serine 163 to lysine 476 is the NACHT domain. Residue glycine 169–serine 176 participates in ATP binding. A winged-helix domain (WHD) region spans residues alanine 356–glutamate 463. Serine 533 carries the post-translational modification Phosphoserine. LRR repeat units follow at residues phenylalanine 578–phenylalanine 598, methionine 655–tyrosine 678, valine 734–serine 757, leucine 761–glutamate 784, leucine 786–valine 811, glutamate 823–leucine 846, valine 847–glycine 869, leucine 877–glutamine 901, lysine 910–methionine 932, leucine 935–asparagine 962, lysine 964–arginine 984, and glutamate 998–leucine 1020.

Homooligomer; homooligomerizes following activation of Naip proteins by pathogenic proteins such as S.typhimurium (Salmonella) flagellin or PrgJ. Component of the NLRC4 inflammasome, at least composed of NLRC4, caspase-1 (CASP1) and some NAIP family member. Interacts with EIF2AK2/PKR. In terms of processing, phosphorylated at Ser-533 following infection of macrophages with S.typhimurium (Salmonella). Phosphorylation is essential for NLRC4 inflammasome function to promote caspase-1 activation and pyroptosis. PRKCD phosphorylates Ser-533 in vitro.

It localises to the cytoplasm. The protein localises to the cytosol. Its function is as follows. Key component of inflammasomes that indirectly senses specific proteins from pathogenic bacteria and fungi and responds by assembling an inflammasome complex that promotes caspase-1 activation, cytokine production and macrophage pyroptosis. The NLRC4 inflammasome is activated as part of the innate immune response to a range of intracellular bacteria. The chain is NLR family CARD domain-containing protein 4 (Nlrc4) from Rattus norvegicus (Rat).